Reading from the N-terminus, the 95-residue chain is Small integral membrane protein 18 (95 aa).

The helical transmembrane segment at 35 to 55 threads the bilayer; the sequence is CFVILLLFIFTVVSLVVLAFL.

The protein localises to the membrane. The protein is Small integral membrane protein 18 (SMIM18) of Homo sapiens (Human).